The primary structure comprises 173 residues: NADH-ubiquinone oxidoreductase chain 6 (173 aa).

The next 5 membrane-spanning stretches (helical) occupy residues Met1–Ser21, Ala28–Gly48, Leu53–Leu73, Val87–Val107, and Leu139–Leu159.

The protein belongs to the complex I subunit 6 family.

The protein localises to the mitochondrion membrane. The enzyme catalyses a ubiquinone + NADH + 5 H(+)(in) = a ubiquinol + NAD(+) + 4 H(+)(out). Functionally, core subunit of the mitochondrial membrane respiratory chain NADH dehydrogenase (Complex I) that is believed to belong to the minimal assembly required for catalysis. Complex I functions in the transfer of electrons from NADH to the respiratory chain. The immediate electron acceptor for the enzyme is believed to be ubiquinone. The sequence is that of NADH-ubiquinone oxidoreductase chain 6 (MT-ND6) from Scyliorhinus canicula (Small-spotted catshark).